Reading from the N-terminus, the 108-residue chain is Gene product 16.9 (108 aa).

Belongs to the phi29likevirus gp16.9 family.

This Bacillus phage phi29 (Bacteriophage phi-29) protein is Gene product 16.9 (16.9).